A 269-amino-acid polypeptide reads, in one-letter code: Alcohol dehydrogenase-related 31 kDa protein (269 aa).

Residue 11-34 (YVADCGGIALETCKVLMTKNIAKL) coordinates NAD(+). Substrate is bound at residue serine 139. Tyrosine 152 acts as the Proton acceptor in catalysis.

This sequence belongs to the short-chain dehydrogenases/reductases (SDR) family.

The protein is Alcohol dehydrogenase-related 31 kDa protein (Adhr) of Drosophila lebanonensis (Fruit fly).